The sequence spans 139 residues: Phosphoribosyl-AMP cyclohydrolase (139 aa).

Residue aspartate 91 participates in Mg(2+) binding. Cysteine 92 lines the Zn(2+) pocket. Aspartate 93 and aspartate 95 together coordinate Mg(2+). Zn(2+) is bound by residues cysteine 110 and cysteine 117.

This sequence belongs to the PRA-CH family. As to quaternary structure, homodimer. Requires Mg(2+) as cofactor. It depends on Zn(2+) as a cofactor.

Its subcellular location is the cytoplasm. It carries out the reaction 1-(5-phospho-beta-D-ribosyl)-5'-AMP + H2O = 1-(5-phospho-beta-D-ribosyl)-5-[(5-phospho-beta-D-ribosylamino)methylideneamino]imidazole-4-carboxamide. It functions in the pathway amino-acid biosynthesis; L-histidine biosynthesis; L-histidine from 5-phospho-alpha-D-ribose 1-diphosphate: step 3/9. In terms of biological role, catalyzes the hydrolysis of the adenine ring of phosphoribosyl-AMP. The protein is Phosphoribosyl-AMP cyclohydrolase of Brucella canis (strain ATCC 23365 / NCTC 10854 / RM-666).